Reading from the N-terminus, the 566-residue chain is Oxygen-dependent choline dehydrogenase (566 aa).

7 to 36 (DYIICGAGSAGNVLATRLTEDPNVTVLLLE) provides a ligand contact to FAD. The interval 183 to 203 (QQEGFGPMDRTVTPKGRRAST) is disordered. The Proton acceptor role is filled by His474.

Belongs to the GMC oxidoreductase family. FAD is required as a cofactor.

It catalyses the reaction choline + A = betaine aldehyde + AH2. It carries out the reaction betaine aldehyde + NAD(+) + H2O = glycine betaine + NADH + 2 H(+). It participates in amine and polyamine biosynthesis; betaine biosynthesis via choline pathway; betaine aldehyde from choline (cytochrome c reductase route): step 1/1. Its function is as follows. Involved in the biosynthesis of the osmoprotectant glycine betaine. Catalyzes the oxidation of choline to betaine aldehyde and betaine aldehyde to glycine betaine at the same rate. The sequence is that of Oxygen-dependent choline dehydrogenase from Burkholderia ambifaria (strain ATCC BAA-244 / DSM 16087 / CCUG 44356 / LMG 19182 / AMMD) (Burkholderia cepacia (strain AMMD)).